A 140-amino-acid chain; its full sequence is Cytochrome c-type biogenesis protein CcmE (140 aa).

Residues 1–7 (MKRKHKR) lie on the Cytoplasmic side of the membrane. Residues 8 to 28 (LLFVLASFCAAGCALLFILSE) traverse the membrane as a helical; Signal-anchor for type II membrane protein segment. Residues 29-140 (LRESVSFFYT…TIPKALPEPK (112 aa)) are Periplasmic-facing. Residues His121 and Tyr125 each contribute to the heme site.

The protein belongs to the CcmE/CycJ family.

The protein localises to the cell inner membrane. Its function is as follows. Heme chaperone required for the biogenesis of c-type cytochromes. Transiently binds heme delivered by CcmC and transfers the heme to apo-cytochromes in a process facilitated by CcmF and CcmH. This Anaplasma marginale (strain Florida) protein is Cytochrome c-type biogenesis protein CcmE.